The sequence spans 433 residues: Ornithine decarboxylase 1B, chloroplastic (433 aa).

The residue at position 96 (K96) is an N6-(pyridoxal phosphate)lysine. Pyridoxal 5'-phosphate contacts are provided by residues S228, G266, and 299 to 302 (EPGR). Residue 342-343 (YD) participates in substrate binding. C378 functions as the Proton donor; shared with dimeric partner in the catalytic mechanism. D379 contacts substrate. Y407 is a pyridoxal 5'-phosphate binding site.

The protein belongs to the Orn/Lys/Arg decarboxylase class-II family. In terms of assembly, homodimer. Only the dimer is catalytically active, as the active sites are constructed of residues from both monomers. Requires pyridoxal 5'-phosphate as cofactor.

The protein resides in the plastid. It localises to the chloroplast. The enzyme catalyses L-ornithine + H(+) = putrescine + CO2. Its pathway is alkaloid biosynthesis; nicotine biosynthesis. The protein operates within amine and polyamine biosynthesis; putrescine biosynthesis via L-ornithine pathway; putrescine from L-ornithine: step 1/1. In terms of biological role, involved in the biosynthesis of pyridine alkaloid natural products, leading mainly to the production of anabasine, anatabine, nicotine and nornicotine, effective deterrents against herbivores with antiparasitic and pesticide properties (neurotoxins); nornicotine serves as the precursor in the synthesis of the carcinogen compound N'-nitrosonornicotine (NNN). Catalyzes the first and rate-limiting step of polyamine biosynthesis that converts ornithine into putrescine, which is the precursor for the polyamines, spermidine and spermine. Polyamines are essential for cell proliferation and are implicated in cellular processes, ranging from DNA replication to apoptosis. In Nicotiana tabacum (Common tobacco), this protein is Ornithine decarboxylase 1B, chloroplastic.